The following is a 449-amino-acid chain: MFKRNDRSKNGFNALRLGVSFVLASSCLIGTAYADVPSNNLPSTTLTEEAVSATDSAAASTTLAAGDLYVAPNGNVSNPGTISSPTTLEAALTQIAPGKTIYLRGGNYAYSSTITIQRGNNGSNGSLKGLVAYGSEKPVLDFSAQAFGSANRGLQLNGDFWLVKGLEVKGAGDNGIYIGGSNNRIENVETHHNRDTGLQLGRYSPNASTSEWPANNLILNSYSHDNADPDNGEDADGFAAKLTVGSGNVFDNCLAAYNVDDGWDLYSKTETGPIGAVTILNSVAHHNGQTSDGTSTANSDGNGFKLGGDKIKVNHIVKNSIAFQNKKHGFTYNSNPGTITLTNNTSWDNGQSNFAFDKGEHVFINNLSFEGTASDKTSGTDQDNSNVWWKNKKTTNAKGLAASADDFVSLVPSITRGADGSIQLGDFLKLAKGSDLIGSGTPSGNIGAR.

Positions 1-26 are cleaved as a signal peptide; that stretch reads MFKRNDRSKNGFNALRLGVSFVLASS. Cys-27 is lipidated: N-palmitoyl cysteine. A lipid anchor (S-diacylglycerol cysteine) is attached at Cys-27. 7 PbH1 repeats span residues 158 to 179, 180 to 202, 213 to 242, 245 to 267, 274 to 308, 336 to 358, and 359 to 391; these read GDFW…IYIG, GSNN…QLGR, PANN…AAKL, GSGN…DLYS, IGAV…KLGG, PGTI…AFDK, and GEHV…WWKN. 4 residues coordinate Ca(2+): Asp-236, Asp-260, Asp-261, and Asp-264. The active-site Proton acceptor is the Lys-305.

Belongs to the polysaccharide lyase 9 family. Ca(2+) serves as cofactor.

It localises to the secreted. It catalyses the reaction Eliminative cleavage of (1-&gt;4)-alpha-D-galacturonan to give oligosaccharides with 4-deoxy-alpha-D-galact-4-enuronosyl groups at their non-reducing ends.. With respect to regulation, activated in presence of the surfactant polysorbate 20, while inhibited in the presence of polysorbate 40, polysorbate 60, polysorbate 80, Triton X-100 and sodium dodecyl sulfate. Inhibited by the metal chelator ethylenediaminetetraacetic acid (EDTA). Inhibited by iron and cobalt ions. Its function is as follows. Presents an endo-cleaving activity on the homogalacturonan (HG) region in pectin with a preference for low- or unmethylated pectin. The chain is Pectate lyase L from Paenibacillus polymyxa (strain SC2) (Bacillus polymyxa).